A 247-amino-acid chain; its full sequence is Ubiquinone biosynthesis O-methyltransferase (247 aa).

The S-adenosyl-L-methionine site is built by arginine 39, glycine 70, aspartate 91, and methionine 134.

Belongs to the methyltransferase superfamily. UbiG/COQ3 family.

The catalysed reaction is a 3-demethylubiquinol + S-adenosyl-L-methionine = a ubiquinol + S-adenosyl-L-homocysteine + H(+). The enzyme catalyses a 3-(all-trans-polyprenyl)benzene-1,2-diol + S-adenosyl-L-methionine = a 2-methoxy-6-(all-trans-polyprenyl)phenol + S-adenosyl-L-homocysteine + H(+). It participates in cofactor biosynthesis; ubiquinone biosynthesis. In terms of biological role, O-methyltransferase that catalyzes the 2 O-methylation steps in the ubiquinone biosynthetic pathway. The chain is Ubiquinone biosynthesis O-methyltransferase from Cereibacter sphaeroides (strain ATCC 17025 / ATH 2.4.3) (Rhodobacter sphaeroides).